The following is a 290-amino-acid chain: ATP synthase gamma chain (290 aa).

The protein belongs to the ATPase gamma chain family. As to quaternary structure, F-type ATPases have 2 components, CF(1) - the catalytic core - and CF(0) - the membrane proton channel. CF(1) has five subunits: alpha(3), beta(3), gamma(1), delta(1), epsilon(1). CF(0) has three main subunits: a, b and c.

The protein resides in the cell membrane. In terms of biological role, produces ATP from ADP in the presence of a proton gradient across the membrane. The gamma chain is believed to be important in regulating ATPase activity and the flow of protons through the CF(0) complex. This is ATP synthase gamma chain from Roseiflexus sp. (strain RS-1).